The chain runs to 403 residues: Creatinase (403 aa).

The active site involves H232.

The protein belongs to the peptidase M24 family. Creatinase subfamily. In terms of assembly, homodimer.

The catalysed reaction is creatine + H2O = sarcosine + urea. This chain is Creatinase, found in Flavobacterium sp. (strain U-188).